A 380-amino-acid chain; its full sequence is Pectinesterase QRT1 (380 aa).

Positions 1-26 are cleaved as a signal peptide; that stretch reads MKVEAFIPAVLLLCFGVMLCLKSSCA. Residues asparagine 74 and asparagine 137 are each glycosylated (N-linked (GlcNAc...) asparagine). The substrate site is built by threonine 164 and glutamine 198. Aspartate 221 (proton donor) is an active-site residue. Asparagine 227 carries an N-linked (GlcNAc...) asparagine glycan. Residues cysteine 235 and cysteine 255 are joined by a disulfide bond. The active-site Nucleophile is aspartate 242. Residues arginine 298 and tryptophan 300 each contribute to the substrate site. Asparagine 302 is a glycosylation site (N-linked (GlcNAc...) asparagine).

This sequence belongs to the pectinesterase family. As to expression, expressed in flower buds, siliques, developing guard cells, floral nectares, at the stigmatic surface, in the hypocotyl-root transition zone and the area of lateral root emergence. Not expressed in mature leaves.

It is found in the secreted. The protein localises to the cell wall. The enzyme catalyses [(1-&gt;4)-alpha-D-galacturonosyl methyl ester](n) + n H2O = [(1-&gt;4)-alpha-D-galacturonosyl](n) + n methanol + n H(+). The protein operates within glycan metabolism; pectin degradation; 2-dehydro-3-deoxy-D-gluconate from pectin: step 1/5. Pectinesterase required for cell type-specific pectin degradation to separate microspores. This chain is Pectinesterase QRT1, found in Arabidopsis thaliana (Mouse-ear cress).